The sequence spans 191 residues: GDP-mannose pyrophosphatase (191 aa).

Residues Tyr-17, Lys-38–Glu-40, Arg-67, and Ala-85–Leu-87 each bind GDP-alpha-D-mannose. In terms of domain architecture, Nudix hydrolase spans Asp-43–Leu-180. Ala-85, Glu-100, and Glu-104 together coordinate Mg(2+). The Nudix box signature appears at Gly-86–Gly-106. GDP-alpha-D-mannose contacts are provided by residues Glu-104, Glu-127, Asp-150–Glu-151, and Lys-176. Glu-151 serves as a coordination point for Mg(2+).

The protein belongs to the Nudix hydrolase family. NudK subfamily. In terms of assembly, homodimer. Requires Mg(2+) as cofactor.

It carries out the reaction GDP-alpha-D-mannose + H2O = alpha-D-mannose 1-phosphate + GMP + 2 H(+). Nucleoside diphosphate sugar hydrolase that hydrolyzes GDP-mannose as its preferred substrate, yielding GMP and mannose-1-phosphate. The polypeptide is GDP-mannose pyrophosphatase (nudK) (Salmonella choleraesuis (strain SC-B67)).